A 383-amino-acid chain; its full sequence is G-protein coupled receptor E1 (383 aa).

A run of 9 helical transmembrane segments spans residues serine 13–alanine 35, leucine 78–isoleucine 98, methionine 109–methionine 129, valine 160–alanine 180, isoleucine 190–phenylalanine 210, valine 242–isoleucine 262, leucine 279–leucine 299, leucine 323–valine 343, and leucine 351–serine 371. A disulfide bridge links cysteine 145 with cysteine 222.

It belongs to the G-protein coupled receptor 1 family.

It localises to the host membrane. In Equine herpesvirus 2 (strain 86/87) (EHV-2), this protein is G-protein coupled receptor E1 (E1).